The primary structure comprises 82 residues: Putative antiholin (82 aa).

Residues 1–8 (MKMDTGTK) lie on the Cytoplasmic side of the membrane. The helical transmembrane segment at 9–25 (VRTILFLIAWVNQLLSF) threads the bilayer. The Periplasmic segment spans residues 26-40 (DNLEPIPVDETTAQQ). A helical transmembrane segment spans residues 41–57 (VYDAVSVLFTIVVTVWT). Over 58–82 (SFKNNYLTLKGRKQREALKKNGLTK) the chain is Cytoplasmic.

As to quaternary structure, homomultimer. Interacts with isoform Antiholin; this interaction blocks the holin homomultimerization and delays host cell lysis.

It is found in the host cell inner membrane. Its function is as follows. Probably functions as a holin together with holin-like protein 26. Accumulates harmlessly in the cytoplasmic membrane until it reaches a critical concentration that triggers the formation of micron-scale pores (holes) causing host cell membrane disruption and endolysin escape into the periplasmic space. Determines the precise timing of host cell lysis. Functionally, counteracts the aggregation of the holin molecules and thus of pore formation. This is Putative antiholin (26) from Bacillus subtilis (Bacteriophage SPP1).